Reading from the N-terminus, the 561-residue chain is Arginine--tRNA ligase (561 aa).

Positions 129–139 (ANPTGPLHIGH) match the 'HIGH' region motif.

Belongs to the class-I aminoacyl-tRNA synthetase family. Monomer.

The protein resides in the cytoplasm. The catalysed reaction is tRNA(Arg) + L-arginine + ATP = L-arginyl-tRNA(Arg) + AMP + diphosphate. This chain is Arginine--tRNA ligase, found in Geotalea uraniireducens (strain Rf4) (Geobacter uraniireducens).